The chain runs to 216 residues: MASKGIDKTIYFVRHGQVSHDVDENGVHREHDPLLNDEGRKQALQLQHDLDAEKLPIELILVSPMRRALETMKIGFQHYIEDKHIPVKVIPLLQDCGDWACNVGSYTKDLEKQFPGYDYTACHEDPVFPKKEKIYKADYKTSIQRSRVLAEFFAKVPEKVFAVVTHGVDIRLFQKIQKPEDSLDAVPKEHSFSPCQHEEFRMHYEDDKNWNFEPVK.

His-15 acts as the Tele-phosphohistidine intermediate in catalysis.

Belongs to the phosphoglycerate mutase family. BPG-dependent PGAM subfamily.

The protein resides in the cytoplasm. The protein localises to the nucleus. This is Probable phosphatase SPAC513.02 from Schizosaccharomyces pombe (strain 972 / ATCC 24843) (Fission yeast).